A 359-amino-acid chain; its full sequence is 4-galactosyl-N-acetylglucosaminide 3-alpha-L-fucosyltransferase FUT6 (359 aa).

Topologically, residues 1 to 14 (MDPLGPAKTQWSWR) are cytoplasmic. Residues 15-34 (CCLTALLFQLLVAVCFFSYL) form a helical; Signal-anchor for type II membrane protein membrane-spanning segment. Residues 35–359 (RVSRDDPTVY…QTRSIAAWFT (325 aa)) lie on the Lumenal side of the membrane. The segment at 73 to 112 (KPIALPRCSEMVPGTADCNITADRKVYPQADAVIVHHREV) is determines site-specific fucosylation. Asparagine 91, asparagine 153, and asparagine 184 each carry an N-linked (GlcNAc...) asparagine glycan.

This sequence belongs to the glycosyltransferase 10 family. As to quaternary structure, homodimer and monomer. Monomer (secreted form). N-glycosylated. In terms of processing, proteolytic cleavage releases a secreted glycoform of 43 kDa.

Its subcellular location is the golgi apparatus. It is found in the golgi stack membrane. The protein resides in the secreted. The enzyme catalyses a beta-D-galactosyl-(1-&gt;4)-N-acetyl-beta-D-glucosaminyl derivative + GDP-beta-L-fucose = a beta-D-galactosyl-(1-&gt;4)-[alpha-L-fucosyl-(1-&gt;3)]-N-acetyl-beta-D-glucosaminyl derivative + GDP + H(+). It catalyses the reaction an N-acetyl-alpha-neuraminyl-(2-&gt;3)-beta-D-galactosyl-(1-&gt;4)-N-acetyl-beta-D-glucosaminyl derivative + GDP-beta-L-fucose = an alpha-Neu5Ac-(2-&gt;3)-beta-D-Gal-(1-&gt;4)-[alpha-L-Fuc-(1-&gt;3)]-beta-D-GlcNAc derivative + GDP + H(+). It carries out the reaction an alpha-Neu5Ac-(2-&gt;3)-beta-D-Gal-(1-&gt;4)-beta-D-GlcNAc-(1-&gt;3)-beta-D-Gal-(1-&gt;4)-[alpha-L-Fuc-(1-&gt;3)]-beta-D-GlcNAc derivative + GDP-beta-L-fucose = an alpha-Neu5Ac-(2-&gt;3)-beta-D-Gal-(1-&gt;4)-[alpha-L-Fuc-(1-&gt;3)]-beta-D-GlcNAc-(1-&gt;3)-beta-D-Gal-(1-&gt;4)-[alpha-L-Fuc-(1-&gt;3)]-beta-D-GlcNAc derivative + GDP + H(+). The catalysed reaction is a neolactoside nLc6Cer + GDP-beta-L-fucose = beta-D-Gal-(1-&gt;4)-[alpha-L-Fuc-(1-&gt;3)]-beta-D-GlcNAc-(1-&gt;3)-beta-D-Gal-(1-&gt;4)-beta-D-GlcNAc-(1-&gt;3)-beta-D-Gal-(1-&gt;4)-beta-D-Glc-(1&lt;-&gt;1')-Cer + GDP + H(+). The enzyme catalyses a neolactoside nLc6Cer + GDP-beta-L-fucose = beta-D-galactosyl-(1-&gt;4)-N-acetyl-beta-D-glucosaminyl-(1-&gt;3)-beta-D-galactosyl-(1-&gt;4)-[alpha-L-fucosyl-(1-&gt;3)]-N-acetyl-beta-D-glucosaminyl-(1-&gt;3)-beta-D-galactosyl-(1-&gt;4)-beta-D-glucosyl-(1&lt;-&gt;1')-ceramide + GDP + H(+). It catalyses the reaction a neolactoside VI(3)-alpha-NeuNAc-nLc6Cer + GDP-beta-L-fucose = a neolactoside VI(3)-alpha-NeuAc,V(3)-alphaFuc-nLc6Cer + GDP + H(+). It carries out the reaction beta-D-galactosyl-(1-&gt;4)-N-acetyl-D-glucosamine + GDP-beta-L-fucose = beta-D-galactosyl-(1-&gt;4)-[alpha-L-fucosyl-(1-&gt;3)]-N-acetyl-D-glucosamine + GDP + H(+). The catalysed reaction is N-acetyl-alpha-neuraminosyl-(2-&gt;3)-beta-D-galactosyl-(1-&gt;4)-N-acetyl-beta-D-glucosamine + GDP-beta-L-fucose = N-acetyl-alpha-neuraminosyl-(2-&gt;3)-beta-D-galactosyl-(1-&gt;4)-[alpha-L-fucosyl-(1-&gt;3)]-N-acetyl-beta-D-glucosamine + GDP + H(+). The enzyme catalyses lactose + GDP-beta-L-fucose = beta-D-galactosyl-(1-&gt;4)-[alpha-L-fucosyl-(1-&gt;3)]-D-glucose + GDP + H(+). It catalyses the reaction alpha-L-Fuc-(1-&gt;2)-beta-D-Gal-(1-&gt;4)-D-Glc + GDP-beta-L-fucose = alpha-L-Fuc-(1-&gt;2)-beta-D-Gal-(1-&gt;4)-[alpha-L-Fuc-(1-&gt;3)]-D-Glc + GDP + H(+). It carries out the reaction a beta-D-galactosyl-(1-&gt;4)-N-acetyl-beta-D-6-sulfooxy-glucosaminyl derivative + GDP-beta-L-fucose = a beta-D-galactosyl-(1-&gt;4)-[alpha-L-fucosyl-(1-&gt;3)]-N-acetyl-beta-D-6-sulfooxy-glucosaminyl derivative + GDP + H(+). The protein operates within protein modification; protein glycosylation. Functionally, catalyzes the transfer of L-fucose, from a guanosine diphosphate-beta-L-fucose, to the N-acetyl glucosamine (GlcNAc) of a distal alpha2,3 sialylated lactosamine unit of a glycoprotein- or glycolipid-linked sialopolylactosamines chain or of a distal or internal lactosamine unit of a neutral glycoprotein- or glycolipid-linked polylactosamines chain through an alpha-1,3 glycosidic linkage and participates in surface expression of the sialyl Lewis X (sLe(x)), Lewis X (Le(x)) and non sialylated VIM2 determinants. Moreover transfers fucose to H-type 2 (Fucalpha1-2Galbeta1-4GlcNAc) chain acceptor substrates and participates in difucosylated sialyl Lewis x determinants. Also fucosylates a polylactosamine substrate having a 6 sulfate modification at the GlcNAc moiety and gives rise to sialyl and non-sialyl 6-sulfo lewis X. Does not have activity towards type 1 ((Galbeta1-3GlcNAc)) and H-type 1 chain (Fucalpha1-2Galbeta1-3GlcNAc) acceptors substrates. This chain is 4-galactosyl-N-acetylglucosaminide 3-alpha-L-fucosyltransferase FUT6, found in Pongo pygmaeus (Bornean orangutan).